Consider the following 66-residue polypeptide: Large ribosomal subunit protein bL31 (66 aa).

The Zn(2+) site is built by cysteine 16, cysteine 18, cysteine 36, and cysteine 39.

It belongs to the bacterial ribosomal protein bL31 family. Type A subfamily. Part of the 50S ribosomal subunit. Requires Zn(2+) as cofactor.

Functionally, binds the 23S rRNA. This is Large ribosomal subunit protein bL31 from Nautilia profundicola (strain ATCC BAA-1463 / DSM 18972 / AmH).